Here is a 369-residue protein sequence, read N- to C-terminus: MKYLVLVLCLTSCACRDIGLWTFRYVYNESDNVVFSPYGLTSALSVLRIAAGGNTKREIDVPESVVEDSDAFLALRELFVDASVPLRPEFTAEFSSRFNTSVQRVTFNSENVKDVINSYVKDKTGGDVPRVLDASLDRDTKMLLLSSVRMKTSWRHVFDPSFTTDQPFYSGNVTYKVRMMNKIDTLKTETFTLRNVGYSVTELPYKRRQTAMLLVVPDDLGEIVRALDLSLVRFWIRNMRKDVCQVVMPKFSVESVLDLRDALQRLGVRDAFDPSRADFGQASPSNDLYVTKVLQTSKIEADERGTTASSDTAITLIPRNALTAIVANKPFMFLIYHKPTTTVLFMGTITKGEKVIYDTEGRDDVVSSV.

It belongs to the serpin family. Poxviruses subfamily.

Functionally, important in virulence. The polypeptide is Serine proteinase inhibitor 1 (SPI-1) (Oryctolagus cuniculus (Rabbit)).